The chain runs to 88 residues: Apolipoprotein C-I (88 aa).

The first 26 residues, 1-26, serve as a signal peptide directing secretion; sequence MRLILSLPVLAVVLAMVLEGPAPAQA.

It belongs to the apolipoprotein C1 family.

It localises to the secreted. Inhibitor of lipoprotein binding to the low density lipoprotein (LDL) receptor, LDL receptor-related protein, and very low density lipoprotein (VLDL) receptor. Associates with high density lipoproteins (HDL) and the triacylglycerol-rich lipoproteins in the plasma and makes up about 10% of the protein of the VLDL and 2% of that of HDL. Appears to interfere directly with fatty acid uptake and is also the major plasma inhibitor of cholesteryl ester transfer protein (CETP). Binds free fatty acids and reduces their intracellular esterification. Modulates the interaction of APOE with beta-migrating VLDL and inhibits binding of beta-VLDL to the LDL receptor-related protein. The chain is Apolipoprotein C-I (APOC1) from Eidolon helvum (Straw-colored fruit bat).